The chain runs to 208 residues: Ribosomal RNA large subunit methyltransferase E (208 aa).

Residues Gly-62, Trp-64, Asp-82, Asp-98, and Asp-123 each contribute to the S-adenosyl-L-methionine site. Lys-163 serves as the catalytic Proton acceptor.

Belongs to the class I-like SAM-binding methyltransferase superfamily. RNA methyltransferase RlmE family.

The protein localises to the cytoplasm. It catalyses the reaction uridine(2552) in 23S rRNA + S-adenosyl-L-methionine = 2'-O-methyluridine(2552) in 23S rRNA + S-adenosyl-L-homocysteine + H(+). Functionally, specifically methylates the uridine in position 2552 of 23S rRNA at the 2'-O position of the ribose in the fully assembled 50S ribosomal subunit. The sequence is that of Ribosomal RNA large subunit methyltransferase E from Actinobacillus pleuropneumoniae serotype 5b (strain L20).